The primary structure comprises 156 residues: Transcription elongation factor GreA (156 aa).

This sequence belongs to the GreA/GreB family.

In terms of biological role, necessary for efficient RNA polymerase transcription elongation past template-encoded arresting sites. The arresting sites in DNA have the property of trapping a certain fraction of elongating RNA polymerases that pass through, resulting in locked ternary complexes. Cleavage of the nascent transcript by cleavage factors such as GreA or GreB allows the resumption of elongation from the new 3'terminus. GreA releases sequences of 2 to 3 nucleotides. This chain is Transcription elongation factor GreA, found in Thermomicrobium roseum (strain ATCC 27502 / DSM 5159 / P-2).